Here is a 122-residue protein sequence, read N- to C-terminus: Basic phospholipase A2 vipoxin B chain (122 aa).

Cystine bridges form between Cys26–Cys115, Cys28–Cys44, Cys43–Cys95, Cys49–Cys122, Cys50–Cys88, Cys57–Cys81, and Cys75–Cys86. Tyr27, Gly29, and Gly31 together coordinate Ca(2+). His47 is an active-site residue. Asp48 contributes to the Ca(2+) binding site. The active site involves Asp89.

This sequence belongs to the phospholipase A2 family. Group II subfamily. D49 sub-subfamily. Heterodimer of A (AC P04084) and B chains; non-covalently linked. The A chain (acidic) is non-toxic, and increases the toxicity of the B chain (basic). The A chain may act as factor stabilizing the complex structure and hence retaining its toxicity by preventing non-specific binding. Upon binding to the target membranes the A chain is postulated to dissociate. Ca(2+) serves as cofactor. Expressed by the venom gland.

It is found in the secreted. The enzyme catalyses a 1,2-diacyl-sn-glycero-3-phosphocholine + H2O = a 1-acyl-sn-glycero-3-phosphocholine + a fatty acid + H(+). Heterodimer: postsynaptic neurotoxin. In terms of biological role, monomer: snake venom phospholipase A2 (PLA2) that shows hemolytic activity and inhibition of platelet aggregation. The hemolytic activity occurs only in presence of fatty acids (unsaturated fatty acids facilitate induce a strong hemolytic activity, whereas saturated fatty acids induce a slight activity). The inhibition of platelet aggregation is almost maximal when aggregation is induced by collagen, and arachidonic acid, whereas it is only of 30% when the aggregation is induced by ADP. PLA2 catalyzes the calcium-dependent hydrolysis of the 2-acyl groups in 3-sn-phosphoglycerides. This is Basic phospholipase A2 vipoxin B chain from Vipera ammodytes meridionalis (Eastern sand viper).